Consider the following 1441-residue polypeptide: Envelopment polyprotein (1441 aa).

Positions Met-1–Ala-13 are cleaved as a signal peptide. The Lumenal segment spans residues Ser-14–Asn-200. The N-linked (GlcNAc...) asparagine; by host glycan is linked to Asn-57. A transmembrane helix spans residues Ile-201–Ser-221. The Cytoplasmic portion of the chain corresponds to Lys-222 to Lys-305. A transmembrane helix spans residues Gly-306–Ile-326. The Lumenal segment spans residues Asn-327 to Cys-361. A membrane pass occupies residues Ile-362–Phe-382. The Cytoplasmic portion of the chain corresponds to Lys-383–Trp-450. A membrane pass occupies residues Met-451–Val-471. Residues Gln-472 to Tyr-1395 are Lumenal-facing. Asn-490 carries an N-linked (GlcNAc...) asparagine; by host glycan. Residues Trp-1066–Asp-1087 are fusion peptide. The N-linked (GlcNAc...) asparagine; by host glycan is linked to Asn-1177. Over Ile-1396 to Leu-1416 the chain traverses the membrane. The Cytoplasmic portion of the chain corresponds to Leu-1417–Ala-1433.

This sequence belongs to the orthobunyaviruses M polyprotein family. In terms of assembly, glycoprotein C and Glycoprotein N interact with each other.

The protein localises to the virion membrane. It localises to the host Golgi apparatus membrane. It is found in the host endoplasmic reticulum membrane. Its function is as follows. Glycoprotein C and glycoprotein N interact with each other and are present at the surface of the virion. They are able to attach the virion to a cell receptor and to promote fusion of membranes after endocytosis of the virion. The sequence is that of Envelopment polyprotein (GP) from Bunyavirus La Crosse (isolate Human/United States/L78/1978).